The chain runs to 642 residues: Chaperone protein DnaK (642 aa).

At threonine 196 the chain carries Phosphothreonine; by autocatalysis. The segment covering 593–603 (STMYQTPSGDT) has biased composition (polar residues). A disordered region spans residues 593–642 (STMYQTPSGDTPPSEPETGASEESKGGDKTQGDGEVDAEYEVIDGNDKDK). Residues 614–624 (EESKGGDKTQG) are compositionally biased toward basic and acidic residues. The span at 626–636 (GEVDAEYEVID) shows a compositional bias: acidic residues.

The protein belongs to the heat shock protein 70 family.

In terms of biological role, acts as a chaperone. This chain is Chaperone protein DnaK, found in Chlorobium phaeobacteroides (strain BS1).